Reading from the N-terminus, the 964-residue chain is Cycloisomaltooligosaccharide glucanotransferase (964 aa).

An N-terminal signal peptide occupies residues 1–30 (MRVKILPLVFMTLLLIVPSQMLLPSGQANA). CBM6 domains follow at residues 413 to 538 (DRYE…LTLG) and 740 to 863 (NMYE…LKLD).

The protein belongs to the glycosyl hydrolase 66 family.

The enzyme catalyses cyclizes part of a (1-&gt;6)-alpha-D-glucan chain by formation of a (1-&gt;6)-alpha-D-glucosidic bond.. Its function is as follows. Produces cycloisomaltooligosaccharide from dextran. This chain is Cycloisomaltooligosaccharide glucanotransferase (cit), found in Niallia circulans (Bacillus circulans).